A 241-amino-acid polypeptide reads, in one-letter code: Oil body-associated protein 1B (241 aa).

Polar residues predominate over residues 1–12 (MEKAVHSSTTSG). A disordered region spans residues 1–22 (MEKAVHSSTTSGPAVPGETTKT).

This sequence belongs to the OBAP family.

The polypeptide is Oil body-associated protein 1B (Arabidopsis thaliana (Mouse-ear cress)).